We begin with the raw amino-acid sequence, 435 residues long: Amino acid transporter AVT6C (435 aa).

Positions 1 to 24 (MTPQIKTHLLPKQEPSSSENHGSS) are disordered. Helical transmembrane passes span 28 to 48 (IVFN…PAAF), 53 to 73 (IVPA…SVGF), 100 to 120 (IAVQ…FSII), 148 to 168 (WNTR…PLVL), 181 to 201 (VSFL…ISAL), 219 to 239 (GSFW…TFHF), 260 to 280 (ISVI…YLLF), 307 to 327 (IVRL…NFSL), 354 to 374 (LALL…WYFF), 375 to 395 (QFMG…AIVL), and 408 to 428 (IVAA…ISTN).

It belongs to the amino acid/polyamine transporter 2 family. Amino acid/auxin permease (AAAP) (TC 2.A.18.6) subfamily.

It is found in the membrane. The polypeptide is Amino acid transporter AVT6C (Arabidopsis thaliana (Mouse-ear cress)).